A 425-amino-acid chain; its full sequence is Threonine synthase (425 aa).

Lysine 105 is modified (N6-(pyridoxal phosphate)lysine).

Belongs to the threonine synthase family. Pyridoxal 5'-phosphate serves as cofactor.

It catalyses the reaction O-phospho-L-homoserine + H2O = L-threonine + phosphate. Its pathway is amino-acid biosynthesis; L-threonine biosynthesis; L-threonine from L-aspartate: step 5/5. In terms of biological role, catalyzes the gamma-elimination of phosphate from L-phosphohomoserine and the beta-addition of water to produce L-threonine. The polypeptide is Threonine synthase (thrC) (Haemophilus influenzae (strain ATCC 51907 / DSM 11121 / KW20 / Rd)).